The primary structure comprises 349 residues: Ribonucleoside-diphosphate reductase small chain (349 aa).

Fe cation-binding residues include Asp-99, Glu-130, and His-133. Tyr-137 is an active-site residue. Residues Glu-192, Glu-226, and His-229 each coordinate Fe cation.

The protein belongs to the ribonucleoside diphosphate reductase small chain family. Heterodimer of a large and a small subunit. It depends on Fe cation as a cofactor.

It catalyses the reaction a 2'-deoxyribonucleoside 5'-diphosphate + [thioredoxin]-disulfide + H2O = a ribonucleoside 5'-diphosphate + [thioredoxin]-dithiol. Its function is as follows. Provides the precursors necessary for DNA synthesis. Catalyzes the biosynthesis of deoxyribonucleotides from the corresponding ribonucleotides. The sequence is that of Ribonucleoside-diphosphate reductase small chain (RNR2) from Plasmodium falciparum (isolate Dd2).